Consider the following 147-residue polypeptide: UPF0306 protein YhbP (147 aa).

This sequence belongs to the UPF0306 family.

The protein is UPF0306 protein YhbP of Escherichia coli O157:H7 (strain EC4115 / EHEC).